The sequence spans 411 residues: Acetylornithine aminotransferase (411 aa).

Pyridoxal 5'-phosphate is bound by residues 107-108 (GT) and Phe-141. Residue Arg-144 participates in N(2)-acetyl-L-ornithine binding. Residue 227–230 (DEIQ) coordinates pyridoxal 5'-phosphate. Lys-256 is subject to N6-(pyridoxal phosphate)lysine. Thr-284 provides a ligand contact to N(2)-acetyl-L-ornithine. Residue Thr-285 coordinates pyridoxal 5'-phosphate.

It belongs to the class-III pyridoxal-phosphate-dependent aminotransferase family. ArgD subfamily. In terms of assembly, homodimer. Requires pyridoxal 5'-phosphate as cofactor.

It localises to the cytoplasm. It catalyses the reaction N(2)-acetyl-L-ornithine + 2-oxoglutarate = N-acetyl-L-glutamate 5-semialdehyde + L-glutamate. The protein operates within amino-acid biosynthesis; L-arginine biosynthesis; N(2)-acetyl-L-ornithine from L-glutamate: step 4/4. The sequence is that of Acetylornithine aminotransferase from Xylella fastidiosa (strain 9a5c).